A 238-amino-acid polypeptide reads, in one-letter code: MVEKKSPAEGWPVVNGDYIVGDPESPVAATTLASHIEDIPVEAGAAIAGPCKTENLGIEKMIANLISNPNIRFLILCGSEVQGHITGQSIEALHQNGVDPDKRNIIGATGAIPYIENIPDEGIERFQKQLEIVNLIDVEDADAIKAKVKECIEKDPGAFEEEAMIIKVEEGGEEEEGEEVKPVAPETALIEARMRNIQTQVKMIGSTNRMFAGMYSGKVQGIMIGLAFTLTLGILLLV.

Topologically, residues Val2–Lys218 are cytoplasmic. His84 is a 5-hydroxybenzimidazolylcob(I)amide binding site. The chain crosses the membrane as a helical span at residues Val219–Leu237. Residue Val238 is a topological domain, extracellular.

Belongs to the MtrA family. As to quaternary structure, the complex is composed of 8 subunits; MtrA, MtrB, MtrC, MtrD, MtrE, MtrF, MtrG and MtrH. It depends on 5-hydroxybenzimidazolylcob(I)amide as a cofactor.

The protein resides in the cell membrane. It carries out the reaction 5-methyl-5,6,7,8-tetrahydromethanopterin + coenzyme M + 2 Na(+)(in) = 5,6,7,8-tetrahydromethanopterin + methyl-coenzyme M + 2 Na(+)(out). It participates in one-carbon metabolism; methanogenesis from CO(2); methyl-coenzyme M from 5,10-methylene-5,6,7,8-tetrahydromethanopterin: step 2/2. Part of a complex that catalyzes the formation of methyl-coenzyme M and tetrahydromethanopterin from coenzyme M and methyl-tetrahydromethanopterin. This is an energy-conserving, sodium-ion translocating step. The sequence is that of Tetrahydromethanopterin S-methyltransferase subunit A 1 from Methanothermobacter marburgensis (strain ATCC BAA-927 / DSM 2133 / JCM 14651 / NBRC 100331 / OCM 82 / Marburg) (Methanobacterium thermoautotrophicum).